We begin with the raw amino-acid sequence, 207 residues long: Large ribosomal subunit protein uL4 (207 aa).

The interval His49 to Ile78 is disordered.

The protein belongs to the universal ribosomal protein uL4 family. Part of the 50S ribosomal subunit.

Its function is as follows. One of the primary rRNA binding proteins, this protein initially binds near the 5'-end of the 23S rRNA. It is important during the early stages of 50S assembly. It makes multiple contacts with different domains of the 23S rRNA in the assembled 50S subunit and ribosome. Functionally, forms part of the polypeptide exit tunnel. The chain is Large ribosomal subunit protein uL4 from Streptococcus agalactiae serotype Ia (strain ATCC 27591 / A909 / CDC SS700).